The following is a 445-amino-acid chain: MEQQVKDDIQRVFQLQKKQQKALRASTAEQRREKLQRFLDSVIAHEEEIIEAIRKDVRKPYHEVKKAEIEGTKKAIRDNMNNLEQWMAPKEVGSSLSPDANGILMYEPKGVTLILGPWNYPFMLTMAPLAASLAAGNSAIVKLSDFTMNTSNIAAKVIRDAFDEKEVAIFEGEVEVATELLDQPFDHIFFTGSTNVGKIVMTAAAKHLASVTLELGGKSPTIIDSEYDLMDAAKKIAVGKFVNAGQTCIAPDYLFIKKDVQDRFAGILQTVVNAGFMEDDHTPDRSKFTQIVNDRNFNRVKDLFDDAIERGAEVVFGGVFDASDRTISPTVLKNVTPDMKIMQEEIFASILPMMNYEDIDEVIDYVNDRDKPLALYVFSKNQDLIDNVLQHTTSGNAAINDVVVHFSDVNLPFGGVNTSGIGSYHGVYGFKEFSHEKGVFIQAAE.

Active-site residues include Glu-214 and Cys-248.

The protein belongs to the aldehyde dehydrogenase family.

It carries out the reaction an aldehyde + NAD(+) + H2O = a carboxylate + NADH + 2 H(+). This chain is Putative aldehyde dehydrogenase AldX (aldX), found in Bacillus subtilis (strain 168).